A 397-amino-acid polypeptide reads, in one-letter code: Proteasome-activating nucleotidase (397 aa).

Residues 15–58 (DYVTFLKRRIRQLELQVRTLEADKERLERELSRLRMEMSRLRQP) are a coiled coil. ATP contacts are provided by residues 182-187 (GCGKTL) and histidine 321. The tract at residues 395–397 (MYG) is docks into pockets in the proteasome alpha-ring to cause gate opening.

It belongs to the AAA ATPase family. Homohexamer. The hexameric complex has a two-ring architecture resembling a top hat that caps the 20S proteasome core at one or both ends. Upon ATP-binding, the C-terminus of PAN interacts with the alpha-rings of the proteasome core by binding to the intersubunit pockets.

It localises to the cytoplasm. In terms of biological role, ATPase which is responsible for recognizing, binding, unfolding and translocation of substrate proteins into the archaeal 20S proteasome core particle. Is essential for opening the gate of the 20S proteasome via an interaction with its C-terminus, thereby allowing substrate entry and access to the site of proteolysis. Thus, the C-termini of the proteasomal ATPase function like a 'key in a lock' to induce gate opening and therefore regulate proteolysis. Unfolding activity requires energy from ATP hydrolysis, whereas ATP binding alone promotes ATPase-20S proteasome association which triggers gate opening, and supports translocation of unfolded substrates. In Thermococcus kodakarensis (strain ATCC BAA-918 / JCM 12380 / KOD1) (Pyrococcus kodakaraensis (strain KOD1)), this protein is Proteasome-activating nucleotidase.